The primary structure comprises 114 residues: Iron-sulfur cluster insertion protein ErpA (114 aa).

Iron-sulfur cluster contacts are provided by Cys-42, Cys-106, and Cys-108.

It belongs to the HesB/IscA family. In terms of assembly, homodimer. Iron-sulfur cluster is required as a cofactor.

In terms of biological role, required for insertion of 4Fe-4S clusters for at least IspG. In Buchnera aphidicola subsp. Acyrthosiphon pisum (strain APS) (Acyrthosiphon pisum symbiotic bacterium), this protein is Iron-sulfur cluster insertion protein ErpA.